Here is a 723-residue protein sequence, read N- to C-terminus: Transmembrane channel-like protein 7 (723 aa).

2 disordered regions span residues 1–28 (MSES…LSLD) and 51–71 (RRRT…KPTD). Topologically, residues 1–168 (MSESSGSALQ…GIQSYFSFLR (168 aa)) are extracellular. The N-linked (GlcNAc...) asparagine glycan is linked to asparagine 24. Residue asparagine 84 is glycosylated (N-linked (GlcNAc...) asparagine). A Phosphoserine modification is found at serine 89. Asparagine 96 carries N-linked (GlcNAc...) asparagine glycosylation. Residues 169-189 (FLVLLNLVIFLIIFMLVLLPV) traverse the membrane as a helical segment. Over 190 to 219 (LLTKYKITNSSFVLIPFKDMDKQCTVYPVS) the chain is Cytoplasmic. The helical transmembrane segment at 220–240 (SSGLIYFYSYIIDLLSGTGFL) threads the bilayer. Over 241–263 (EETSLFYGHYTIDGVKFQNFTYD) the chain is Extracellular. Asparagine 259 carries N-linked (GlcNAc...) asparagine glycosylation. The helical transmembrane segment at 264-284 (LPLAYLLSTIASLALSLLWIV) threads the bilayer. Residues 285–362 (KRSVEGFKIN…EETIRIYSLR (78 aa)) are Cytoplasmic-facing. A helical membrane pass occupies residues 363 to 383 (LFLNCIVLAVLGACFYAIYVA). The Extracellular segment spans residues 384 to 404 (TVFSQEHMKKEIDKMVFGENL). The chain crosses the membrane as a helical span at residues 405-425 (FILYLPSIVITLANFITPMIF). Over 426–494 (AKIIRYEDYS…PCWETQVGQE (69 aa)) the chain is Cytoplasmic. A helical membrane pass occupies residues 495–515 (MYKLMIFDFIIILAVTLFVDF). At 516–555 (PRKLLVTYCSSCKLIQCWGQQEFAIPDNVLGIVYGQTICW) the chain is on the extracellular side. The chain crosses the membrane as a helical span at residues 556-576 (IGAFFSPLLPAIATLKFIIIF). The Cytoplasmic segment spans residues 577–601 (YVKEWSLLYTCRPSPRPFRASNSNF). Residues 602 to 622 (FFLLVLLIGLCLAIIPLTISI) traverse the membrane as a helical segment. Residues 623-665 (SRIPSSKACGPFTNFNTTWEVIPKTVSTFPSSLQSFIHGVTSE) are Extracellular-facing. The N-linked (GlcNAc...) asparagine glycan is linked to asparagine 638. The helical transmembrane segment at 666–686 (AFAVPFFMIICLIMFYFIALA) threads the bilayer. Over 687–723 (GAHKRVVIQLREQLSLESRDKCYLIQKLTEAQRDMRN) the chain is Cytoplasmic.

Belongs to the TMC family. Interacts with PIEZO2; the interaction inhibits PIEZO2-conducted mechanically activated currents.

It is found in the membrane. Its function is as follows. Acts as an inhibitory modulator of PIEZO2 mechanosensitive channel in dorsal root ganglion (DRG) neurons through physical interactions or interference with the interaction between PIEZO2 and the cytoskeleton. This is Transmembrane channel-like protein 7 from Homo sapiens (Human).